The primary structure comprises 159 residues: Ribonuclease H (159 aa).

The RNase H type-1 domain occupies 10–153 (TQTQVVIYTD…ADALANQGVE (144 aa)). 4 residues coordinate Mg(2+): D19, E57, D79, and D145.

This sequence belongs to the RNase H family. In terms of assembly, monomer. It depends on Mg(2+) as a cofactor.

The protein resides in the cytoplasm. The catalysed reaction is Endonucleolytic cleavage to 5'-phosphomonoester.. Functionally, endonuclease that specifically degrades the RNA of RNA-DNA hybrids. The chain is Ribonuclease H from Polaromonas sp. (strain JS666 / ATCC BAA-500).